A 255-amino-acid polypeptide reads, in one-letter code: uncharacterized protein (255 aa).

Residues 42–67 are disordered; it reads ACSGSPPEPGKGRPDTTPEQEVPVTA.

This is an uncharacterized protein from Mycobacterium tuberculosis (strain CDC 1551 / Oshkosh).